Reading from the N-terminus, the 358-residue chain is MAGCGEIDHSINMLPTNRKANESCSNTAPSLTVPECAICLQTCVHPVSLPCKHVFCYLCVKGASWLGKRCALCRQEIPEDFLDKPTLLSPEELKAASRGNGEYAWYYEGRNGWWQYGERTSRELEDAFSKGKKNTEMLIAGFLYVADLENMVQYRRNEHGRRRKIKRDIIDIPKKGVAGLRLDCDANTVNLARESSADGADSVSAQSGASVQPLVSSVRPLTSVDGQLTSPATPSPDASTSLEDSFAHLQLSGDNTAERSHRGEGEEDHESPSSGRVPAPDTSIEETESDASSDSEDVSAVVAQHSLTQQRLLVSNANQTVPDRSDRSGTDRSVAGGGTVSVSVRSRRPDGQCTVTEV.

The RING-type zinc-finger motif lies at 36–74 (CAICLQTCVHPVSLPCKHVFCYLCVKGASWLGKRCALCR). Glycyl lysine isopeptide (Lys-Gly) (interchain with G-Cter in ubiquitin) cross-links involve residues lysine 84 and lysine 94. The region spanning 91 to 167 (EELKAASRGN…EHGRRRKIKR (77 aa)) is the WWE domain. Tyrosine 107, arginine 110, and tryptophan 114 together coordinate a glycoprotein. Lysine 130 participates in a covalent cross-link: Glycyl lysine isopeptide (Lys-Gly) (interchain with G-Cter in ubiquitin). Residues tyrosine 144, glutamine 153, arginine 163, and lysine 175 each coordinate a glycoprotein. Lysine 175 is covalently cross-linked (Glycyl lysine isopeptide (Lys-Gly) (interchain with G-Cter in ubiquitin)). Residues 253 to 358 (GDNTAERSHR…PDGQCTVTEV (106 aa)) form a disordered region. Over residues 283–297 (SIEETESDASSDSED) the composition is skewed to acidic residues. Residues serine 289 and serine 293 each carry the phosphoserine modification. Over residues 305 to 322 (HSLTQQRLLVSNANQTVP) the composition is skewed to polar residues.

Can form homooligomers. Interacts with PARsylated AXIN1, AXIN2, BLZF1, CASC3, H1-2, IPO7, LIG3, NCL, PARP1, XRCC1, XRCC5 and XRCC6. Interacts with DDB1, DHX15, IQGAP1, LRPPRC, PARP2, PRKDC, RUVBL2, TNKS1 and TNKS2. Binding often leads to interactor ubiquitination, in the presence of the appropriate E1 and E2 enzymes, and proteasomal degradation. Ubiquitinated; autoubiquitinated. Autoubiquitination is enhanced upon poly(ADP-ribose)-binding.

The protein resides in the cytoplasm. The protein localises to the cytosol. It localises to the nucleus. It catalyses the reaction S-ubiquitinyl-[E2 ubiquitin-conjugating enzyme]-L-cysteine + [acceptor protein]-L-lysine = [E2 ubiquitin-conjugating enzyme]-L-cysteine + N(6)-ubiquitinyl-[acceptor protein]-L-lysine.. The protein operates within protein modification; protein ubiquitination. Its function is as follows. E3 ubiquitin-protein ligase that specifically binds poly-ADP-ribosylated (PARsylated) proteins and mediates their ubiquitination and subsequent degradation. May regulate many important biological processes, such as cell survival and DNA damage response. Acts as an activator of the Wnt signaling pathway by mediating the ubiquitination of PARsylated AXIN1 and AXIN2, 2 key components of the beta-catenin destruction complex. Acts in cooperation with tankyrase proteins (TNKS and TNKS2), which mediate PARsylation of target proteins AXIN1, AXIN2, BLZF1, CASC3, TNKS and TNKS2. Recognizes and binds tankyrase-dependent PARsylated proteins via its WWE domain and mediates their ubiquitination, leading to their degradation. Different ubiquitin linkage types have been observed: TNKS2 undergoes ubiquitination at 'Lys-48' and 'Lys-63', while AXIN1 is only ubiquitinated at 'Lys-48'. May regulate TNKS and TNKS2 subcellular location, preventing aggregation at a centrosomal location. Neuroprotective protein. Protects the brain against N-methyl-D-aspartate (NMDA) receptor-mediated glutamate excitotoxicity and ischemia, by interfering with PAR-induced cell death, called parthanatos. Prevents nuclear translocation of AIFM1 in a PAR-binding dependent manner. Does not affect PARP1 activation. Protects against cell death induced by DNA damaging agents, such as N-methyl-N-nitro-N-nitrosoguanidine (MNNG) and rescues cells from G1 arrest. Promotes cell survival after gamma-irradiation. Facilitates DNA repair. This chain is E3 ubiquitin-protein ligase RNF146 (RNF146), found in Pongo abelii (Sumatran orangutan).